The chain runs to 349 residues: Aspartate carbamoyltransferase catalytic subunit (349 aa).

Carbamoyl phosphate-binding residues include R59 and T60. L-aspartate is bound at residue K87. Residues R109, H142, and Q145 each contribute to the carbamoyl phosphate site. Positions 182 and 253 each coordinate L-aspartate. Residues G294 and P295 each coordinate carbamoyl phosphate.

Belongs to the aspartate/ornithine carbamoyltransferase superfamily. ATCase family. Heterododecamer (2C3:3R2) of six catalytic PyrB chains organized as two trimers (C3), and six regulatory PyrI chains organized as three dimers (R2).

The enzyme catalyses carbamoyl phosphate + L-aspartate = N-carbamoyl-L-aspartate + phosphate + H(+). It participates in pyrimidine metabolism; UMP biosynthesis via de novo pathway; (S)-dihydroorotate from bicarbonate: step 2/3. Catalyzes the condensation of carbamoyl phosphate and aspartate to form carbamoyl aspartate and inorganic phosphate, the committed step in the de novo pyrimidine nucleotide biosynthesis pathway. The polypeptide is Aspartate carbamoyltransferase catalytic subunit (Synechococcus sp. (strain CC9311)).